Reading from the N-terminus, the 317-residue chain is sn-1-specific diacylglycerol lipase ABHD11 (317 aa).

A mitochondrion-targeting transit peptide spans 1–20 (MSNFAMSALCRVFTRGAPCG). In terms of domain architecture, AB hydrolase-1 spans 69–304 (PLVFLHGLFG…ASHWIHADKP (236 aa)). Catalysis depends on charge relay system residues Ser142, Glu238, and His297.

This sequence belongs to the AB hydrolase superfamily. In terms of processing, phosphorylated.

The protein resides in the mitochondrion. It localises to the mitochondrion matrix. The catalysed reaction is 1-octadecanoyl-2-(5Z,8Z,11Z,14Z-eicosatetraenoyl)-sn-glycerol + H2O = 2-(5Z,8Z,11Z,14Z-eicosatetraenoyl)-glycerol + octadecanoate + H(+). It catalyses the reaction a 1,2-diacyl-sn-glycerol + H2O = a 2-acylglycerol + a fatty acid + H(+). It carries out the reaction a 1,3-diacyl-sn-glycerol + H2O = a 1-acyl-sn-glycerol + a fatty acid + H(+). The enzyme catalyses 1-octadecanoyl-2-(9Z-octadecenoyl)-sn-glycerol + H2O = 2-(9Z-octadecenoyl)-glycerol + octadecanoate + H(+). The catalysed reaction is 1-octadecanoyl-2-(4Z,7Z,10Z,13Z,16Z,19Z-docosahexaenoyl)-sn-glycerol + H2O = 2-(4Z,7Z,10Z,13Z,16Z,19Z-docosahexaenoyl)-glycerol + octadecanoate + H(+). It catalyses the reaction 1,2-didecanoylglycerol + H2O = decanoylglycerol + decanoate + H(+). In terms of biological role, catalyzes the hydrolysis of diacylglycerol in vitro and may function as a key regulator in lipid metabolism, namely by regulating the intracellular levels of diacylglycerol. 1,2-diacyl-sn-glycerols are the preferred substrate over 1,3-diacyl-sn-glycerols. The enzyme hydrolyzes stearate in preference to palmitate from the sn-1 position of 1,2-diacyl-sn-glycerols. In Danio rerio (Zebrafish), this protein is sn-1-specific diacylglycerol lipase ABHD11.